The following is a 76-amino-acid chain: Kappa-actitoxin-Avd4e (76 aa).

The first 19 residues, 1–19 (MNKALFLCLVVLCAAVVFA), serve as a signal peptide directing secretion. Residues 20 to 31 (AEDLQKAKHAPF) constitute a propeptide that is removed on maturation. 3 disulfides stabilise this stretch: Cys37-Cys72, Cys39-Cys65, and Cys55-Cys73. The short motif at 45–47 (RGD) is the Cell attachment site element.

Belongs to the sea anemone type 3 (BDS) potassium channel toxin family. Moderately expressed in the ectodermal tissue from the distal and proximal tentacles, body wall, and oral disk.

Its subcellular location is the secreted. It is found in the nematocyst. Is member of a fraction that shows antiangiogenic activity, since it inhibits human microvascular endothelial cells (HMEC) tubulogenesis. This protein could be a kunitz-type inhibitor with a RGD motif that could block angiogenesis in binding on integrins. Blocks Kv3 voltage-gated potassium channels. Reduces blood pressure. This chain is Kappa-actitoxin-Avd4e, found in Anemonia viridis (Snakelocks anemone).